A 610-amino-acid polypeptide reads, in one-letter code: Ectonucleoside triphosphate diphosphohydrolase 7 (610 aa).

The Cytoplasmic segment spans residues Met-1–Arg-28. The chain crosses the membrane as a helical span at residues Val-29–Leu-49. At Gln-50–Tyr-555 the chain is on the vesicular side. Glu-217 functions as the Proton acceptor in the catalytic mechanism. Residues Asn-336 and Asn-400 are each glycosylated (N-linked (GlcNAc...) asparagine). Cys-454 and Cys-483 form a disulfide bridge. A helical transmembrane segment spans residues Asn-556–Leu-576. The Cytoplasmic portion of the chain corresponds to Arg-577–Thr-610.

This sequence belongs to the GDA1/CD39 NTPase family. Ca(2+) serves as cofactor. Mg(2+) is required as a cofactor.

It localises to the cytoplasmic vesicle membrane. It catalyses the reaction a ribonucleoside 5'-triphosphate + H2O = a ribonucleoside 5'-diphosphate + phosphate + H(+). The catalysed reaction is UTP + H2O = UDP + phosphate + H(+). The enzyme catalyses GTP + H2O = GDP + phosphate + H(+). It carries out the reaction CTP + H2O = CDP + phosphate + H(+). Catalyzes the hydrolysis of nucleoside triphosphates and diphosphates in a calcium- or magnesium-dependent manner. Preferentially hydrolyzes nucleoside 5'-triphosphates, with substrate preference for UTP &gt; GTP &gt; CTP. Hydrolyzes ATP and nucleoside diphosphates only to a minor extent. The protein is Ectonucleoside triphosphate diphosphohydrolase 7 (entpd7) of Xenopus tropicalis (Western clawed frog).